A 227-amino-acid chain; its full sequence is DNA repair protein RecO (227 aa).

Belongs to the RecO family.

Its function is as follows. Involved in DNA repair and RecF pathway recombination. The protein is DNA repair protein RecO of Pseudomonas syringae pv. syringae (strain B728a).